The following is a 506-amino-acid chain: Maturase K (506 aa).

It belongs to the intron maturase 2 family. MatK subfamily.

Its subcellular location is the plastid. The protein localises to the chloroplast. Usually encoded in the trnK tRNA gene intron. Probably assists in splicing its own and other chloroplast group II introns. The chain is Maturase K from Rhododendron tsusiophyllum (Rhododendron).